The chain runs to 342 residues: Probable dual-specificity RNA methyltransferase RlmN (342 aa).

Residue E91 is the Proton acceptor of the active site. One can recognise a Radical SAM core domain in the interval 97 to 327; it reads YKHGNSICVS…TTIRREMGAD (231 aa). C104 and C332 are disulfide-bonded. Residues C111, C115, and C118 each contribute to the [4Fe-4S] cluster site. Residues 158 to 159, S190, 213 to 215, and N289 each bind S-adenosyl-L-methionine; these read GE and SLH. C332 (S-methylcysteine intermediate) is an active-site residue.

Belongs to the radical SAM superfamily. RlmN family. [4Fe-4S] cluster serves as cofactor.

It is found in the cytoplasm. It catalyses the reaction adenosine(2503) in 23S rRNA + 2 reduced [2Fe-2S]-[ferredoxin] + 2 S-adenosyl-L-methionine = 2-methyladenosine(2503) in 23S rRNA + 5'-deoxyadenosine + L-methionine + 2 oxidized [2Fe-2S]-[ferredoxin] + S-adenosyl-L-homocysteine. The enzyme catalyses adenosine(37) in tRNA + 2 reduced [2Fe-2S]-[ferredoxin] + 2 S-adenosyl-L-methionine = 2-methyladenosine(37) in tRNA + 5'-deoxyadenosine + L-methionine + 2 oxidized [2Fe-2S]-[ferredoxin] + S-adenosyl-L-homocysteine. Specifically methylates position 2 of adenine 2503 in 23S rRNA and position 2 of adenine 37 in tRNAs. The polypeptide is Probable dual-specificity RNA methyltransferase RlmN (Clostridium botulinum (strain Okra / Type B1)).